The following is a 461-amino-acid chain: Photosystem II CP43 reaction center protein (461 aa).

Residues 1-2 constitute a propeptide that is removed on maturation; that stretch reads ME. The residue at position 3 (threonine 3) is an N-acetylthreonine. Phosphothreonine is present on threonine 3. The next 5 membrane-spanning stretches (helical) occupy residues 57-81, 122-143, 166-188, 243-263, and 279-300; these read LFEV…PHIA, LIGP…KDKN, KAMY…RVIT, TPWP…LSYS, and WFNN…ASQS. Glutamate 355 is a binding site for [CaMn4O5] cluster. The helical transmembrane segment at 435–459 threads the bilayer; that stretch reads RARAAAAGFEKGIDRFDEPVLSMRP.

Belongs to the PsbB/PsbC family. PsbC subfamily. As to quaternary structure, PSII is composed of 1 copy each of membrane proteins PsbA, PsbB, PsbC, PsbD, PsbE, PsbF, PsbH, PsbI, PsbJ, PsbK, PsbL, PsbM, PsbT, PsbX, PsbY, PsbZ, Psb30/Ycf12, at least 3 peripheral proteins of the oxygen-evolving complex and a large number of cofactors. It forms dimeric complexes. Binds multiple chlorophylls and provides some of the ligands for the Ca-4Mn-5O cluster of the oxygen-evolving complex. It may also provide a ligand for a Cl- that is required for oxygen evolution. PSII binds additional chlorophylls, carotenoids and specific lipids. is required as a cofactor. Phosphorylated in vitro.

The protein resides in the plastid. Its subcellular location is the chloroplast thylakoid membrane. In terms of biological role, one of the components of the core complex of photosystem II (PSII). It binds chlorophyll and helps catalyze the primary light-induced photochemical processes of PSII. PSII is a light-driven water:plastoquinone oxidoreductase, using light energy to abstract electrons from H(2)O, generating O(2) and a proton gradient subsequently used for ATP formation. This is Photosystem II CP43 reaction center protein from Chlamydomonas reinhardtii (Chlamydomonas smithii).